We begin with the raw amino-acid sequence, 431 residues long: Histidinol dehydrogenase (431 aa).

Residues Tyr127, Gln185, and Asn208 each coordinate NAD(+). Ser234, Gln256, and His259 together coordinate substrate. Gln256 and His259 together coordinate Zn(2+). Catalysis depends on proton acceptor residues Glu323 and His324. Substrate-binding residues include His324, Asp357, Glu411, and His416. Asp357 contacts Zn(2+). His416 is a Zn(2+) binding site.

This sequence belongs to the histidinol dehydrogenase family. Zn(2+) is required as a cofactor.

The catalysed reaction is L-histidinol + 2 NAD(+) + H2O = L-histidine + 2 NADH + 3 H(+). It functions in the pathway amino-acid biosynthesis; L-histidine biosynthesis; L-histidine from 5-phospho-alpha-D-ribose 1-diphosphate: step 9/9. In terms of biological role, catalyzes the sequential NAD-dependent oxidations of L-histidinol to L-histidinaldehyde and then to L-histidine. This Vibrio vulnificus (strain YJ016) protein is Histidinol dehydrogenase.